We begin with the raw amino-acid sequence, 357 residues long: MLIFFNKYLHINLNILSYIPYRAIFSLLTSFFINLYIGPYFIYYFKKLQTYQIIRNNGPKTHYSKKNTPTMGGIFIIFSILFSTILYCNLSNIYIWYVISILIGYGLIGFIDDYKKIKYKNSQGLKLKWKYFFLSIIAFIFICMIKINNKDIISTELIIPFCIKNDFEINYLYIFLSYFVLVGTSNAVNLTDGLDGLAIMPVIFLTCGLTLISLFSDNINISHYLHVHYVKNSTELAILCMAIVGSGLGFLWFNSYPAKVFMGDVGSLALGGSLGAIAILLHQELLLIIMGGIFVFETISVILQIISFKIRKKRIFQMAPVHHHYEVKGILEPLIIVRFWIVSLILLLISLISLKVC.

The next 10 helical transmembrane spans lie at 23-43 (AIFS…YFIY), 70-90 (TMGG…YCNL), 91-111 (SNIY…IGFI), 127-147 (LKWK…MIKI), 171-191 (YLYI…VNLT), 196-216 (GLAI…SLFS), 236-256 (LAIL…FNSY), 260-280 (VFMG…IAIL), 286-306 (LLII…LQII), and 334-354 (LIIV…LISL).

Belongs to the glycosyltransferase 4 family. MraY subfamily. Requires Mg(2+) as cofactor.

The protein resides in the cell inner membrane. It catalyses the reaction UDP-N-acetyl-alpha-D-muramoyl-L-alanyl-gamma-D-glutamyl-meso-2,6-diaminopimeloyl-D-alanyl-D-alanine + di-trans,octa-cis-undecaprenyl phosphate = di-trans,octa-cis-undecaprenyl diphospho-N-acetyl-alpha-D-muramoyl-L-alanyl-D-glutamyl-meso-2,6-diaminopimeloyl-D-alanyl-D-alanine + UMP. It participates in cell wall biogenesis; peptidoglycan biosynthesis. Catalyzes the initial step of the lipid cycle reactions in the biosynthesis of the cell wall peptidoglycan: transfers peptidoglycan precursor phospho-MurNAc-pentapeptide from UDP-MurNAc-pentapeptide onto the lipid carrier undecaprenyl phosphate, yielding undecaprenyl-pyrophosphoryl-MurNAc-pentapeptide, known as lipid I. This Buchnera aphidicola subsp. Acyrthosiphon pisum (strain 5A) protein is Phospho-N-acetylmuramoyl-pentapeptide-transferase.